The primary structure comprises 244 residues: Ribonuclease 3 (244 aa).

The 128-residue stretch at 21 to 148 folds into the RNase III domain; that stretch reads DHAPLLEAWG…MLGAIYLHHG (128 aa). Mg(2+) is bound at residue Glu-61. The active site involves Asp-65. Asp-134 and Glu-137 together coordinate Mg(2+). Glu-137 is an active-site residue. The region spanning 175–242 is the DRBM domain; sequence DWKTVLLEKL…AKQAVQKLNE (68 aa).

It belongs to the ribonuclease III family. Homodimer. The cofactor is Mg(2+).

Its subcellular location is the cytoplasm. It catalyses the reaction Endonucleolytic cleavage to 5'-phosphomonoester.. Functionally, digests double-stranded RNA. Involved in the processing of primary rRNA transcript to yield the immediate precursors to the large and small rRNAs (23S and 16S). Processes some mRNAs, and tRNAs when they are encoded in the rRNA operon. Processes pre-crRNA and tracrRNA of type II CRISPR loci if present in the organism. The polypeptide is Ribonuclease 3 (Corynebacterium jeikeium (strain K411)).